We begin with the raw amino-acid sequence, 105 residues long: uncharacterized protein (105 aa).

Basic residues predominate over residues 1–11 (MPHRNDRRKSA). The interval 1–20 (MPHRNDRRKSASKAPNAIIH) is disordered.

The protein belongs to the ALB1 family.

The protein localises to the nucleus. It is found in the nucleolus. This is an uncharacterized protein from Schizosaccharomyces pombe (strain 972 / ATCC 24843) (Fission yeast).